The following is a 96-amino-acid chain: MTNPHDVIIRPVVTEHSMAEMGEKKYTFVVAKDANKTEIKKAVEKVFGVSVDKVNTLNYDGKVKRMGRTQGRTSSFKKAVVKLTADSKEIEFFQGM.

Belongs to the universal ribosomal protein uL23 family. In terms of assembly, part of the 50S ribosomal subunit. Contacts protein L29, and trigger factor when it is bound to the ribosome.

One of the early assembly proteins it binds 23S rRNA. One of the proteins that surrounds the polypeptide exit tunnel on the outside of the ribosome. Forms the main docking site for trigger factor binding to the ribosome. The chain is Large ribosomal subunit protein uL23 from Clostridioides difficile (strain 630) (Peptoclostridium difficile).